The chain runs to 267 residues: L-aspartate dehydrogenase (267 aa).

Residues A124 and N190 each contribute to the NAD(+) site. H218 is a catalytic residue.

Belongs to the L-aspartate dehydrogenase family.

The enzyme catalyses L-aspartate + NADP(+) + H2O = oxaloacetate + NH4(+) + NADPH + H(+). The catalysed reaction is L-aspartate + NAD(+) + H2O = oxaloacetate + NH4(+) + NADH + H(+). It functions in the pathway cofactor biosynthesis; NAD(+) biosynthesis; iminoaspartate from L-aspartate (dehydrogenase route): step 1/1. Its function is as follows. Specifically catalyzes the NAD or NADP-dependent dehydrogenation of L-aspartate to iminoaspartate. This is L-aspartate dehydrogenase from Methanocaldococcus jannaschii (strain ATCC 43067 / DSM 2661 / JAL-1 / JCM 10045 / NBRC 100440) (Methanococcus jannaschii).